Reading from the N-terminus, the 934-residue chain is 2-oxoglutarate dehydrogenase E1 component (934 aa).

Residues 515–537 show a composition bias toward basic and acidic residues; sequence RAAQDKIDKSDKMDNPDMERPES. Residues 515-544 form a disordered region; sequence RAAQDKIDKSDKMDNPDMERPESLQEPLQS.

It belongs to the alpha-ketoglutarate dehydrogenase family. Homodimer. Part of the 2-oxoglutarate dehydrogenase (OGDH) complex composed of E1 (2-oxoglutarate dehydrogenase), E2 (dihydrolipoamide succinyltransferase) and E3 (dihydrolipoamide dehydrogenase); the complex contains multiple copies of the three enzymatic components (E1, E2 and E3). Requires thiamine diphosphate as cofactor.

It carries out the reaction N(6)-[(R)-lipoyl]-L-lysyl-[protein] + 2-oxoglutarate + H(+) = N(6)-[(R)-S(8)-succinyldihydrolipoyl]-L-lysyl-[protein] + CO2. E1 component of the 2-oxoglutarate dehydrogenase (OGDH) complex which catalyzes the decarboxylation of 2-oxoglutarate, the first step in the conversion of 2-oxoglutarate to succinyl-CoA and CO(2). The protein is 2-oxoglutarate dehydrogenase E1 component of Staphylococcus haemolyticus (strain JCSC1435).